The following is a 608-amino-acid chain: Actin-interacting protein 1 (608 aa).

WD repeat units follow at residues 62-101 (EHSC…HLLK), 106-149 (PIAG…GEIS), 150-190 (GQSK…FKMT), 193-232 (DHSR…LVGE), 237-276 (AHKG…LVSE), 323-362 (GHNK…NDRI), 366-403 (GHGN…YTDY), 444-483 (PIKY…LEPK), 487-526 (DHLG…PAHN), 531-570 (FHSA…KHTI), and 575-607 (HPQS…HVEN).

It belongs to the WD repeat AIP1 family. Expressed in pupal wing cells.

It is found in the cytoplasm. The protein resides in the cytoskeleton. Induces disassembly of actin filaments in conjunction with ADF/cofilin family proteins. Together with GMF, promotes Arp2/3-nucleated actin filament array disassembly. Essential for organismal and cell viability. Required for the development of normal wing cell planar polarity. In egg chambers and together with GMF, plays an important role in directional migration of border cell clusters. This chain is Actin-interacting protein 1 (flr), found in Drosophila melanogaster (Fruit fly).